Reading from the N-terminus, the 316-residue chain is Adenine deaminase (316 aa).

Positions 14, 16, and 194 each coordinate Zn(2+). Glu-197 (proton donor) is an active-site residue. Asp-275 lines the Zn(2+) pocket. Residue Asp-276 coordinates substrate.

Belongs to the metallo-dependent hydrolases superfamily. Adenosine and AMP deaminases family. Adenine deaminase type 2 subfamily. Zn(2+) is required as a cofactor.

It carries out the reaction adenine + H2O + H(+) = hypoxanthine + NH4(+). Its function is as follows. Catalyzes the hydrolytic deamination of adenine to hypoxanthine. Plays an important role in the purine salvage pathway and in nitrogen catabolism. The protein is Adenine deaminase of Pseudomonas aeruginosa (strain UCBPP-PA14).